We begin with the raw amino-acid sequence, 339 residues long: uncharacterized protein (339 aa).

Zn(2+) contacts are provided by histidine 17, histidine 19, histidine 197, and aspartate 278. Aspartate 279 serves as a coordination point for substrate.

The protein belongs to the metallo-dependent hydrolases superfamily. Adenosine and AMP deaminases family. Adenine deaminase type 2 subfamily. Requires Zn(2+) as cofactor.

It is found in the cytoplasm. The protein localises to the nucleus. This is an uncharacterized protein from Schizosaccharomyces pombe (strain 972 / ATCC 24843) (Fission yeast).